An 873-amino-acid chain; its full sequence is DNA mismatch repair protein MutS (873 aa).

625 to 632 lines the ATP pocket; that stretch reads GPNMGGKS.

The protein belongs to the DNA mismatch repair MutS family.

Functionally, this protein is involved in the repair of mismatches in DNA. It is possible that it carries out the mismatch recognition step. This protein has a weak ATPase activity. The chain is DNA mismatch repair protein MutS from Xanthomonas campestris pv. campestris (strain 8004).